The chain runs to 92 residues: Phenol 2-monooxygenase, auxiliary component DmpK (92 aa).

As to quaternary structure, homotrimer or homotetramer. Interacts with the phenol hydroxylase components DmpL (P1 component) and DmpN (P3 component).

It participates in aromatic compound metabolism; phenol degradation. Functionally, dmpK is an auxiliary protein associated with the multicomponent phenol hydroxylase DmpLMNOP and it may be involved in the post-translational incorporation of iron into the oxygenase component of the phenol hydroxylase. Required for growth on phenol but not for in vitro phenol hydroxylase activity. The protein is Phenol 2-monooxygenase, auxiliary component DmpK of Pseudomonas sp. (strain CF600).